We begin with the raw amino-acid sequence, 625 residues long: Vicilin-like antimicrobial peptides 2-3 (625 aa).

2 disordered regions span residues 120 to 152 and 180 to 212; these read QQKRYEEQQREDEEKYEERMKEGDNKRDPQQRE and RQHGRGGDLMNPQRGGSGRYEEGEEKQSDNPYY. The segment covering 198-212 has biased composition (basic and acidic residues); it reads RYEEGEEKQSDNPYY. Cupin type-1 domains follow at residues 230–369 and 414–584; these read SVLE…ERLR and YNLF…KEVE. Residues 594-614 are disordered; it reads IFFPGPRQHQQQSPRSTKQQQ. Over residues 601–614 the composition is skewed to low complexity; sequence QHQQQSPRSTKQQQ.

This sequence belongs to the 7S seed storage protein family.

It is found in the secreted. Its function is as follows. Antimicrobial peptides 2b, 2c and 2d have antibacterial and antifungal activity against a range of species. The chain is Vicilin-like antimicrobial peptides 2-3 from Macadamia integrifolia (Macadamia nut).